A 135-amino-acid polypeptide reads, in one-letter code: Small ribosomal subunit protein uS12 (135 aa).

The segment at 1–23 is disordered; the sequence is MPTINQLVRKGRHSKTTKSDSPA. D102 carries the 3-methylthioaspartic acid modification.

Belongs to the universal ribosomal protein uS12 family. As to quaternary structure, part of the 30S ribosomal subunit. Contacts proteins S8 and S17. May interact with IF1 in the 30S initiation complex.

Its function is as follows. With S4 and S5 plays an important role in translational accuracy. Interacts with and stabilizes bases of the 16S rRNA that are involved in tRNA selection in the A site and with the mRNA backbone. Located at the interface of the 30S and 50S subunits, it traverses the body of the 30S subunit contacting proteins on the other side and probably holding the rRNA structure together. The combined cluster of proteins S8, S12 and S17 appears to hold together the shoulder and platform of the 30S subunit. This Lactobacillus gasseri (strain ATCC 33323 / DSM 20243 / BCRC 14619 / CIP 102991 / JCM 1131 / KCTC 3163 / NCIMB 11718 / NCTC 13722 / AM63) protein is Small ribosomal subunit protein uS12.